The sequence spans 134 residues: Ribonuclease P protein component (134 aa).

The protein belongs to the RnpA family. Consists of a catalytic RNA component (M1 or rnpB) and a protein subunit.

The catalysed reaction is Endonucleolytic cleavage of RNA, removing 5'-extranucleotides from tRNA precursor.. Its function is as follows. RNaseP catalyzes the removal of the 5'-leader sequence from pre-tRNA to produce the mature 5'-terminus. It can also cleave other RNA substrates such as 4.5S RNA. The protein component plays an auxiliary but essential role in vivo by binding to the 5'-leader sequence and broadening the substrate specificity of the ribozyme. The chain is Ribonuclease P protein component from Pseudomonas putida (strain GB-1).